A 278-amino-acid chain; its full sequence is Digeranylgeranylglyceryl phosphate synthase (278 aa).

A run of 8 helical transmembrane segments spans residues 12–32 (LKNC…ASYF), 34–54 (LAMV…CGFG), 92–112 (LVVM…MAVL), 129–149 (IIGN…GGIA), 153–173 (IDVT…REII), 204–224 (FLLI…FFGI), 226–246 (YMIS…KLVF), and 257–277 (SRNI…GSLF).

This sequence belongs to the UbiA prenyltransferase family. DGGGP synthase subfamily. Mg(2+) serves as cofactor.

It is found in the cell membrane. The catalysed reaction is sn-3-O-(geranylgeranyl)glycerol 1-phosphate + (2E,6E,10E)-geranylgeranyl diphosphate = 2,3-bis-O-(geranylgeranyl)-sn-glycerol 1-phosphate + diphosphate. It participates in membrane lipid metabolism; glycerophospholipid metabolism. Functionally, prenyltransferase that catalyzes the transfer of the geranylgeranyl moiety of geranylgeranyl diphosphate (GGPP) to the C2 hydroxyl of (S)-3-O-geranylgeranylglyceryl phosphate (GGGP). This reaction is the second ether-bond-formation step in the biosynthesis of archaeal membrane lipids. The chain is Digeranylgeranylglyceryl phosphate synthase from Methanococcus maripaludis (strain DSM 14266 / JCM 13030 / NBRC 101832 / S2 / LL).